The chain runs to 219 residues: Proteasome subunit beta type-9 (219 aa).

The propeptide at 1-20 (MLRAGAPTGDLPRAGEVHTG) is removed in mature form. T21 (nucleophile) is an active-site residue. N6-acetyllysine is present on residues K53 and K109.

Belongs to the peptidase T1B family. In terms of assembly, the 26S proteasome consists of a 20S proteasome core and two 19S regulatory subunits. The 20S proteasome core is composed of 28 subunits that are arranged in four stacked rings, resulting in a barrel-shaped structure. The two end rings are each formed by seven alpha subunits, and the two central rings are each formed by seven beta subunits. The catalytic chamber with the active sites is on the inside of the barrel. Component of the immunoproteasome, where it displaces the equivalent housekeeping subunit PSMB6. Component of the spermatoproteasome, a form of the proteasome specifically found in testis. (Microbial infection) Interacts with HIV-1 TAT protein. In terms of processing, autocleaved. The resulting N-terminal Thr residue of the mature subunit is responsible for the nucleophile proteolytic activity.

It localises to the cytoplasm. The protein resides in the nucleus. It catalyses the reaction Cleavage of peptide bonds with very broad specificity.. Functionally, the proteasome is a multicatalytic proteinase complex which is characterized by its ability to cleave peptides with Arg, Phe, Tyr, Leu, and Glu adjacent to the leaving group at neutral or slightly basic pH. The proteasome has an ATP-dependent proteolytic activity. This subunit is involved in antigen processing to generate class I binding peptides. Replacement of PSMB6 by PSMB9 increases the capacity of the immunoproteasome to cleave model peptides after hydrophobic and basic residues. This is Proteasome subunit beta type-9 (PSMB9) from Homo sapiens (Human).